A 128-amino-acid chain; its full sequence is Aspartate 1-decarboxylase (128 aa).

Ser25 (schiff-base intermediate with substrate; via pyruvic acid) is an active-site residue. Pyruvic acid (Ser) is present on Ser25. Residue Thr57 participates in substrate binding. The active-site Proton donor is Tyr58. 73 to 75 (GSA) is a binding site for substrate.

It belongs to the PanD family. Heterooctamer of four alpha and four beta subunits. Requires pyruvate as cofactor. In terms of processing, is synthesized initially as an inactive proenzyme, which is activated by self-cleavage at a specific serine bond to produce a beta-subunit with a hydroxyl group at its C-terminus and an alpha-subunit with a pyruvoyl group at its N-terminus.

Its subcellular location is the cytoplasm. It carries out the reaction L-aspartate + H(+) = beta-alanine + CO2. Its pathway is cofactor biosynthesis; (R)-pantothenate biosynthesis; beta-alanine from L-aspartate: step 1/1. Its function is as follows. Catalyzes the pyruvoyl-dependent decarboxylation of aspartate to produce beta-alanine. The protein is Aspartate 1-decarboxylase of Burkholderia mallei (strain NCTC 10247).